The primary structure comprises 119 residues: MKRVAFVFTHSPHGSTSGREGLDALLAMSALTEEIGVFFVGDGVLQLLPHQQPEKILMRNYIATFGVLPLYDIECCYLCEASVRQRGLSIDTNWVLDVELLAPKAWRSKLADYHSILSF.

The protein belongs to the DsrF/TusC family. As to quaternary structure, heterohexamer, formed by a dimer of trimers. The hexameric TusBCD complex contains 2 copies each of TusB, TusC and TusD. The TusBCD complex interacts with TusE.

The protein resides in the cytoplasm. Functionally, part of a sulfur-relay system required for 2-thiolation of 5-methylaminomethyl-2-thiouridine (mnm(5)s(2)U) at tRNA wobble positions. In Pectobacterium atrosepticum (strain SCRI 1043 / ATCC BAA-672) (Erwinia carotovora subsp. atroseptica), this protein is Protein TusC.